We begin with the raw amino-acid sequence, 294 residues long: Glycine--tRNA ligase alpha subunit (294 aa).

The protein belongs to the class-II aminoacyl-tRNA synthetase family. Tetramer of two alpha and two beta subunits.

It localises to the cytoplasm. The enzyme catalyses tRNA(Gly) + glycine + ATP = glycyl-tRNA(Gly) + AMP + diphosphate. The protein is Glycine--tRNA ligase alpha subunit of Polynucleobacter asymbioticus (strain DSM 18221 / CIP 109841 / QLW-P1DMWA-1) (Polynucleobacter necessarius subsp. asymbioticus).